Reading from the N-terminus, the 208-residue chain is Sodium/potassium-transporting ATPase subunit beta-1-interacting protein 2 (208 aa).

4 helical membrane-spanning segments follow: residues 1 to 23 (MGYC…CVLE), 35 to 55 (APIL…FGTI), 64 to 84 (GYAV…CFYL), and 148 to 168 (VAHS…ACYV).

This sequence belongs to the NKAIN family. Interacts with ATP1B1. In terms of tissue distribution, detected in the brain only and specifically in neurons; expressed in multiple regions such as cerebral cortex, thalamus, cerebellum, olfactory bulb and brainstem, but not in the hippocampus.

It is found in the cell membrane. This chain is Sodium/potassium-transporting ATPase subunit beta-1-interacting protein 2 (Nkain2), found in Mus musculus (Mouse).